Consider the following 1093-residue polypeptide: Atos homolog protein A (1093 aa).

Residues alanine 29 to threonine 37 are transactivation domain 1 (TAD1). Disordered regions lie at residues alanine 396–leucine 479, serine 558–lysine 579, and histidine 746–arginine 788. Residues histidine 746 to aspartate 763 show a composition bias toward basic and acidic residues. The tract at residues leucine 895–tyrosine 952 is required for macropage invasion. The interval phenylalanine 979 to lysine 987 is transactivation domain 2 (TAD2).

It belongs to the ATOS family.

It localises to the nucleus. In terms of biological role, transcription regulator that syncronizes transcriptional and translational programs to promote macrophage invasion of tissues. In Gallus gallus (Chicken), this protein is Atos homolog protein A (ATOSA).